The following is a 357-amino-acid chain: 3-dehydroquinate synthase (357 aa).

Residues 104-108 (GVVGD), 128-129 (TT), Lys-141, and 168-171 (FLET) contribute to the NAD(+) site. The Zn(2+) site is built by Glu-183, His-243, and His-260.

It belongs to the sugar phosphate cyclases superfamily. Dehydroquinate synthase family. Requires NAD(+) as cofactor. The cofactor is Co(2+). It depends on Zn(2+) as a cofactor.

It localises to the cytoplasm. It catalyses the reaction 7-phospho-2-dehydro-3-deoxy-D-arabino-heptonate = 3-dehydroquinate + phosphate. The protein operates within metabolic intermediate biosynthesis; chorismate biosynthesis; chorismate from D-erythrose 4-phosphate and phosphoenolpyruvate: step 2/7. In terms of biological role, catalyzes the conversion of 3-deoxy-D-arabino-heptulosonate 7-phosphate (DAHP) to dehydroquinate (DHQ). This Streptococcus pyogenes serotype M6 (strain ATCC BAA-946 / MGAS10394) protein is 3-dehydroquinate synthase.